A 64-amino-acid chain; its full sequence is Translation machinery-associated protein 7 homolog (64 aa).

The segment at 1–64 is disordered; sequence MTGREGGKKK…TGGIKKSGKK (64 aa). Residues 21 to 50 adopt a coiled-coil conformation; the sequence is EMDEEDMAFKQKQKEQQKAMEAAKQKAAKG. Basic and acidic residues predominate over residues 27–44; it reads MAFKQKQKEQQKAMEAAK.

The protein belongs to the TMA7 family.

The polypeptide is Translation machinery-associated protein 7 homolog (Aedes aegypti (Yellowfever mosquito)).